A 317-amino-acid chain; its full sequence is Ciliary microtubule inner protein 2A (317 aa).

The disordered stretch occupies residues 131 to 153; sequence TPDTPHPPCPPGRKGDSRDLGHP.

The protein belongs to the CIMIP2 family. Microtubule inner protein component of sperm flagellar doublet microtubules.

The protein resides in the cytoplasm. It localises to the cytoskeleton. Its subcellular location is the flagellum axoneme. Its function is as follows. Microtubule inner protein (MIP) part of the dynein-decorated doublet microtubules (DMTs) in flagellum axoneme. Binds to the intra-tubulin interfaces. The chain is Ciliary microtubule inner protein 2A from Homo sapiens (Human).